A 347-amino-acid polypeptide reads, in one-letter code: Probable replication factor C subunit 3 (347 aa).

Belongs to the activator 1 small subunits family. In terms of assembly, heteropentamer of various rfc subunits that forms a complex (RFC) with PCNA in the presence of ATP.

The protein resides in the nucleus. Its function is as follows. The elongation of primed DNA templates by DNA polymerase delta and epsilon requires the action of the accessory proteins PCNA and activator 1. The sequence is that of Probable replication factor C subunit 3 (rfc3) from Dictyostelium discoideum (Social amoeba).